The sequence spans 250 residues: tRNA (guanine-N(1)-)-methyltransferase (250 aa).

Residues Gly116 and 136 to 141 (IGDYVL) each bind S-adenosyl-L-methionine.

The protein belongs to the RNA methyltransferase TrmD family. As to quaternary structure, homodimer.

The protein resides in the cytoplasm. The catalysed reaction is guanosine(37) in tRNA + S-adenosyl-L-methionine = N(1)-methylguanosine(37) in tRNA + S-adenosyl-L-homocysteine + H(+). Specifically methylates guanosine-37 in various tRNAs. This Pseudomonas putida (strain ATCC 700007 / DSM 6899 / JCM 31910 / BCRC 17059 / LMG 24140 / F1) protein is tRNA (guanine-N(1)-)-methyltransferase.